We begin with the raw amino-acid sequence, 158 residues long: U-limacoditoxin(8)-Dv66 (158 aa).

The signal sequence occupies residues 1–24; sequence MALRAPWIALCCVLAVLFVVPAAT. A propeptide spanning residues 25–32 is cleaved from the precursor; sequence RDEERQKR. Repeat copies occupy residues 33-78 and 79-124. The tract at residues 33-158 is 3 X 46 AA tandem repeats; sequence GVDFGLQRGF…AQDPHGPGRK (126 aa). P63 carries the post-translational modification Proline amide. The propeptide occupies 64–78; that stretch reads GRKRRDAYEMERQKR. The tract at residues 101 to 120 is disordered; that stretch reads ARAQDPHGPGRKRRDAYEME. P109 bears the Proline amide mark. Positions 110 to 124 are excised as a propeptide; the sequence is GRKRRDAYEMERQKR. The 3; half-length repeat unit spans residues 125-158; it reads GVDFGLQRGFSGSELAKLKLALARAQDPHGPGRK. At P155 the chain carries Proline amide.

Belongs to the diuretic hormone class 2 family. Expressed by the venom secretory cell of the spine. The spine is a cuticular structure containing a single large nucleated venom-secreting cell at its base. It is an independent unit capable of producing, storing and injecting venom. On the back of D.vulnerans caterpillars, spines are grouped together by 50 to 100 to form scoli, of which there are eight in D.vulnerans.

It is found in the secreted. Probable toxin. Does not show insecticidal, antimicrobial and antiparasitic activities. Does not induce increase in intracellular calcium in mouse DRG neurons, suggesting that it does not induce pain. The chain is U-limacoditoxin(8)-Dv66 from Doratifera vulnerans (Mottled cup moth).